We begin with the raw amino-acid sequence, 355 residues long: Peptide chain release factor 1 (355 aa).

Gln-233 is modified (N5-methylglutamine).

This sequence belongs to the prokaryotic/mitochondrial release factor family. Methylated by PrmC. Methylation increases the termination efficiency of RF1.

The protein localises to the cytoplasm. Peptide chain release factor 1 directs the termination of translation in response to the peptide chain termination codons UAG and UAA. The sequence is that of Peptide chain release factor 1 from Desulforudis audaxviator (strain MP104C).